The following is a 284-amino-acid chain: 2-dehydro-3-deoxyphosphooctonate aldolase (284 aa).

The protein belongs to the KdsA family.

The protein localises to the cytoplasm. The enzyme catalyses D-arabinose 5-phosphate + phosphoenolpyruvate + H2O = 3-deoxy-alpha-D-manno-2-octulosonate-8-phosphate + phosphate. Its pathway is carbohydrate biosynthesis; 3-deoxy-D-manno-octulosonate biosynthesis; 3-deoxy-D-manno-octulosonate from D-ribulose 5-phosphate: step 2/3. It participates in bacterial outer membrane biogenesis; lipopolysaccharide biosynthesis. This chain is 2-dehydro-3-deoxyphosphooctonate aldolase, found in Erwinia tasmaniensis (strain DSM 17950 / CFBP 7177 / CIP 109463 / NCPPB 4357 / Et1/99).